Here is an 81-residue protein sequence, read N- to C-terminus: Conotoxin Eb11.3 (81 aa).

The N-terminal stretch at Met1–Gly23 is a signal peptide. 4 disulfide bridges follow: Cys27/Cys41, Cys34/Cys48, Cys40/Cys56, and Cys47/Cys62. Residue Leu69 is modified to Leucine amide. Residues Ala73–Arg81 constitute a propeptide that is removed on maturation.

The protein belongs to the conotoxin I2 superfamily. In terms of tissue distribution, expressed by the venom duct.

Its subcellular location is the secreted. This is Conotoxin Eb11.3 from Conus eburneus (Ivory cone).